A 366-amino-acid polypeptide reads, in one-letter code: MSAISHHSLSHLNSTVSKRLMPTYSDPVVRIAVLDTGFDGSHPDFSHPRTAYFTGPFSDLPQPEKDEEPQLTRIKAYHDFCQPSPPGDRQGPPPQPHSMVDLAGHGTAIAGLILRLAPRAELVIGRVCHGVDSNELSAPDPSRVAAAIRWAITQKVHIINLSLGYRNQPLKELLPLRAALLEAQRSNILVFASTSNQGSHEPAAWPASDARFAIGVHSCNDMGSAPSGSSCKASENGYNFMAVGENLLVHRLAQKGGGFELVSGSSFATPVVVSVAALVLAFVWQEECKRERDEVGREVMLEDLGSLGGMGRVLMALGEKTAGSYWAVGMKLFWAGYREGDGRDPEKEEKEARRWAWGVLRGAVAY.

The 321-residue stretch at 1–321 (MSAISHHSLS…RVLMALGEKT (321 aa)) folds into the Peptidase S8 domain. Catalysis depends on Asp-35, which acts as the Charge relay system. The disordered stretch occupies residues 79 to 98 (DFCQPSPPGDRQGPPPQPHS). Over residues 83–96 (PSPPGDRQGPPPQP) the composition is skewed to pro residues. Catalysis depends on charge relay system residues His-105 and Ser-266. The chain crosses the membrane as a helical span at residues 261–283 (LVSGSSFATPVVVSVAALVLAFV).

The protein belongs to the peptidase S8 family.

It is found in the membrane. Serine protease involved in heterokaryon incompatibility, a process that ensures that during spontaneous vegetative cell fusion, only compatible cells from the same colony survive (non-self-recognition). In P.anserina, the het-q locus exists as 2 incompatible alleles, het-Q1 (AC B2AXJ5) and het-Q2 (this entry). Prevents cell fusion with strains containing the gasdermin-like protein het-Q1 by mediating proteolytic cleavage and maturation of het-Q1 during the allorecognition process, thereby triggering cell death. The polypeptide is Subtilisin-like protease het-Q2 (Podospora anserina (Pleurage anserina)).